The following is a 447-amino-acid chain: N-succinylarginine dihydrolase (447 aa).

Substrate-binding positions include Ala19–Ser28, Asn110, and His137–Arg138. Glu174 is an active-site residue. Substrate is bound at residue Arg212. The active site involves His248. Asp250 and Asn359 together coordinate substrate. Residue Cys365 is the Nucleophile of the active site.

It belongs to the succinylarginine dihydrolase family. In terms of assembly, homodimer.

It carries out the reaction N(2)-succinyl-L-arginine + 2 H2O + 2 H(+) = N(2)-succinyl-L-ornithine + 2 NH4(+) + CO2. The protein operates within amino-acid degradation; L-arginine degradation via AST pathway; L-glutamate and succinate from L-arginine: step 2/5. Catalyzes the hydrolysis of N(2)-succinylarginine into N(2)-succinylornithine, ammonia and CO(2). This chain is N-succinylarginine dihydrolase, found in Salmonella heidelberg (strain SL476).